The primary structure comprises 113 residues: uncharacterized protein (113 aa).

The segment at 31 to 113 is disordered; the sequence is SNNNNNNNNN…YSPTKFNLQY (83 aa). Residues 32–98 are compositionally biased toward low complexity; that stretch reads NNNNNNNNNN…NNNNNNNNNN (67 aa). Polar residues predominate over residues 99 to 113; sequence SSSFEYSPTKFNLQY.

This is an uncharacterized protein from Dictyostelium discoideum (Social amoeba).